The chain runs to 122 residues: Large ribosomal subunit protein bL17 (122 aa).

The protein belongs to the bacterial ribosomal protein bL17 family. As to quaternary structure, part of the 50S ribosomal subunit. Contacts protein L32.

The sequence is that of Large ribosomal subunit protein bL17 from Neisseria gonorrhoeae (strain ATCC 700825 / FA 1090).